The primary structure comprises 370 residues: MATPNNLTPTNCSWWPISALESDAAKPVETPDAPEASSPAHWPKESLVLYHWTQSFSSQKRLQVRLVIAEKGLACEERDVSLPQSEHKEPWFMRLNLGEEVPVIIHRDNIISDYDQIIDYVERTFTGEHVVALMPEAGSPQHARVLQYRELLDALPMDAYTHGCILHPELTTDSMIPKYATAEIRRHLANATTDLMKLDHEEEPQLSEPYLSKQKKLMAKILEHDDVSYLKKILGELAMVLDQIEAELEKRKLENEGQTCELWLCGCAFTLADVLLGATLHRLKFLGLSKKYWEDGSRPNLQSFFERVQRRFAFRKVLGDIHTTLLSAVIPNAFRLVKRKPPSFFGASFLMGSLGGMGYFAYWYLKKKYI.

The region spanning 45 to 129 is the GST N-terminal domain; it reads ESLVLYHWTQ…YVERTFTGEH (85 aa). The GST C-terminal domain occupies 177–344; sequence PKYATAEIRR…RLVKRKPPSF (168 aa).

This sequence belongs to the GST superfamily.

The protein is Ganglioside-induced differentiation-associated protein 1-like 1 (Gdap1l1) of Mus musculus (Mouse).